The primary structure comprises 388 residues: MNLHEYQAKELFARRGLPVPKGYVCRSAGEAEKATTELGGDLWVAKCQVHAGGRGKSGGVKLCNNPQDVSAFAEQWLGKNLVTYQTDLQGQPVHHILVEAATDIAQELYLGAVIDRSSSRVVFMASTEGGVEIEKVAEKTPHLIHKVTIDPLTGPQPFQGRELAFQLGLTGKKVSQFSQIFMNLAKLFLECDLALLEINPLVITKKEELICLDAKLTVDGNALYRQPELRQIHDVTQEDAREAHAAQFELNYVALEGNIGCMVNGAGLAMGTMDMVKLYGAEPANFLDVGGGATKERVTEAFKIILSDEKVKAILVNIFGGIVRCDLIADGIIAAVAEVGMQIPVVVRLEGNNAKPGAKKLSDSGLNIIAANSLTHAAKQIAAAVKEK.

The ATP-grasp domain maps to 9-244 (KELFARRGLP…VTQEDAREAH (236 aa)). Residues lysine 46, 53–55 (GRG), glutamate 99, threonine 102, and glutamate 107 each bind ATP. 2 residues coordinate Mg(2+): asparagine 199 and aspartate 213. Residues asparagine 264 and 321–323 (GIV) contribute to the substrate site.

This sequence belongs to the succinate/malate CoA ligase beta subunit family. As to quaternary structure, heterotetramer of two alpha and two beta subunits. The cofactor is Mg(2+).

It carries out the reaction succinate + ATP + CoA = succinyl-CoA + ADP + phosphate. The enzyme catalyses GTP + succinate + CoA = succinyl-CoA + GDP + phosphate. It functions in the pathway carbohydrate metabolism; tricarboxylic acid cycle; succinate from succinyl-CoA (ligase route): step 1/1. Functionally, succinyl-CoA synthetase functions in the citric acid cycle (TCA), coupling the hydrolysis of succinyl-CoA to the synthesis of either ATP or GTP and thus represents the only step of substrate-level phosphorylation in the TCA. The beta subunit provides nucleotide specificity of the enzyme and binds the substrate succinate, while the binding sites for coenzyme A and phosphate are found in the alpha subunit. The polypeptide is Succinate--CoA ligase [ADP-forming] subunit beta (Hamiltonella defensa subsp. Acyrthosiphon pisum (strain 5AT)).